A 2193-amino-acid polypeptide reads, in one-letter code: MARARPSVAGGGVAAPPERAGPGRPRRSRTGHHCDPECPGLRAAPRTPGPGAGRRAAKLRPGRGWWALLLLQLHLLRALAQDDVAPYFKTEPGLPQIHLEGNRLVLTCLAEGSWPLEFKWIRNDSELTTYSSEYKYIIPSLQKLDAGFYRCVVRNRMGALLQRKSEIQVAYMGNFMDTDQRKTVSQGHAALLNLLPIVSCPQPQVTWFREGHKIIPSSRIAITLENQLVILATTASDAGAYYVQAVNEKNGENKTSPFIHLSVARDTGTHEAMAPIIVVAPGNRSVVAGSSETTLECIANARPVEELSVHWKRNGVRLTSGLHSYGRRLTITNPTSADTGMYVCEATLRGSTFEPARARAFLSIIEPPYFTAEPESRILGEVEETMDIPCRAMGVPLPTLQWYKDAVPLSKLQNPRYKVLPSGGLHIQKLSPEDSGIFQCFASNEGGEVQTHTYLDVTNIAPAFTQRPVDTTVTDGMTAVLRCEVSGAPKPAITWKRGNHILASGSVRIPRFMLLESGGLRIAPVFIQDAGNYTCYAANTEASVNASAMLTVWNRTSIVHPPEDRVVIKGTTATLCCGATHDPRTSLRYVWKKDNVVITASSSSRIVVEKDGSLVISQTWSGDIGDYTCEIISEGGSDSRTARLEVIELPHPPQNLLASLSPARSHSVTLSWVRPFDGNSPVLYYIVQVSENNSPWKVHLSNVGPEMTGVTVSGLTPARTYQFRVCAVNQVGKGQYSTETSRLMLPEEPPSAPPKNIVASGRTNQSIMVQWQPPPETEHNGVLRGYILRYRLAGLPGEHQQRNISSPEVNYCLVTDLIIWTQYEIQVAAYNGAGLGVFSRAVTEYTLQGVPTAPPQNVQAEAVNSTTVHFLWNPPPQQFINGINQGYKLLAWPADAPETVTVVTIAPDFHGIHHGYITNLKKFTAYFTSVLCFTTPGDGPPSSPQLVWTHEDKPGAVGHLSFTEILDTSLKVSWQEPLERNGIIMGYQISWEVYGRNDSRLTHTLNSTMHEYKIQGLSSLTTYTIDVAALTAAGVGVTTSSTISSGVPPDLPGAPSNLVISNISPRSATLQFRPGYDGKTAICRWIVEGQVGAIGDEEEWVTLYEEENEPDAQMLEIPNLTPYTHYRFRMRQVNIVGPSPFSQSSRVIQTLQAPPDVAPTSLTVRTASETSLRLRWVPLPDSQYNGNPESVGYRVKYWRSDQPSSALAQVVSDRLERELTIEELEEWTEYELRMQAFNAIGAGPWSELVRGRTRESVPSAAPENVSAEAVSSTQILLTWASVPEQDQNGLILGYKVLYCAKDLDPEPRSHVVRGNHTQSALLAGLRKFVVYELQVLAFTRIGNGVPSSPLILERTKDDTPGPPVRLVFPEVRLTAVRIVWQPPEEPNGVILGYQIAYRLASGSPHTFTTVEVGATVRQFTATELAPESAYIFRLSAKTRQGWGEPLEATVITTEKRERPAPPRELLVPQAEVTARSLRLQWVPGSDGASPIRYFTVQVRELPGGEWQTYSSSISHEATACAVERLRPFTSYKLRLKATNDIGDSDFSAETEAVTTLQDVPGEPPGSVSATPHTTSSVLIQWQPPRDESLNGLLQGYRIYYRELESETGMSPEPKTLKSPSALRAELTAQSSFKTVNSSSSLTTYELTHLKKYRRYEVIMTAYNIIGESPASVPVEVFVGEAAPAMAPQNVQVTPLTASQLEVTWDPPPPESQNGNIQGYKVYYWEADSRNETEKMKVLFLPEPVVKIKDLTSHTKYLISISAFNAAGDGPKSDPCQGRTHQAAPGPPSFLAFSEITSTTLNVSWGEPSAANGILQGYRVVYEPLAPVQGVSKVVTVDVKGNWQRWLKVRDLTKGVTYFFRVQARTIAYGPELQANVTAGPAEGSPGSPRNVLVTKSASELTLQWTEGNAGTTPTTGYVIEARPSDEGLWDMFAKDIPRSATSYTVDLDKLRQGVTYEFRVVAVNKAGFGEPSRPSIAVSAQAEAPFYEEWWFLLVMALSSLLLILLVVFVLVLHGQSKKYKSCSTGKGISNMEETVTLDNGGFAALELNSRHLNVKSTFSKKNGTRSPPRPSPGGLHYSDEDICNKYNGAVLTESVNLKEKSVDGSESEASDSDYEEALPKHSFVNHYMSDPTYYNSWKRRPPAAAPHRYEAVAGAEAGPHLHTVITTQSAGGVYTPAGPGARAPLTGFSSFV.

Positions 1-23 (MARARPSVAGGGVAAPPERAGPG) are enriched in low complexity. Residues 1–56 (MARARPSVAGGGVAAPPERAGPGRPRRSRTGHHCDPECPGLRAAPRTPGPGAGRRA) form a disordered region. 5 consecutive Ig-like C2-type domains span residues 86-168 (PYFK…SEIQ), 173-259 (GNFM…SPFI), 275-363 (PIIV…AFLS), 368-458 (PYFT…LDVT), and 462-551 (PAFT…AMLT). An intrachain disulfide couples Cys108 to Cys151. Asn123, Asn253, and Asn283 each carry an N-linked (GlcNAc...) asparagine glycan. Disulfide bonds link Cys297/Cys344, Cys390/Cys440, and Cys483/Cys535. Asn532, Asn545, and Asn554 each carry an N-linked (GlcNAc...) asparagine glycan. Positions 556–645 (TSIVHPPEDR…GSDSRTARLE (90 aa)) constitute an Ig-like C2-type 6 domain. A disulfide bridge connects residues Cys577 and Cys629. 13 Fibronectin type-III domains span residues 652–748 (PPQN…LPEE), 753–849 (PPKN…TLQG), 854–952 (PPQN…THED), 956–1050 (AVGH…VPPD), 1054–1153 (APSN…TLQA), 1158–1256 (APTS…TRES), 1261–1358 (APEN…TKDD), 1362–1456 (PPVR…TEKR), 1461–1558 (PPRE…TLQD), 1563–1681 (PPGS…VGEA), 1686–1782 (APQN…THQA), 1786–1881 (PPSF…AGPA), and 1884–1982 (SPGS…SAQA). 5 N-linked (GlcNAc...) asparagine glycosylation sites follow: Asn764, Asn803, Asn864, Asn997, and Asn1006. Asn1264 and Asn1315 each carry an N-linked (GlcNAc...) asparagine glycan. Residues Asn1636, Asn1730, Asn1801, and Asn1875 are each glycosylated (N-linked (GlcNAc...) asparagine). Residues 1992-2012 (FLLVMALSSLLLILLVVFVLV) traverse the membrane as a helical segment. At 2013–2193 (LHGQSKKYKS…APLTGFSSFV (181 aa)) the chain is on the cytoplasmic side. Residues 2057–2080 (STFSKKNGTRSPPRPSPGGLHYSD) are disordered. The PDZ-binding signature appears at 2187-2193 (TGFSSFV).

This sequence belongs to the sidekick family. Homodimer; mediates homophilic interactions to promote cell adhesion. Interacts (via PDZ-binding motif) with MAGI1, MAGI2, DLG2, DLG3 and DLG4. In terms of assembly, does not mediate homophilic interactions. Expressed by non-overlapping subsets of retinal neurons. Sdk1 and Sdk2 are expressed in non-overlapping subsets of interneurons and retinal ganglion cells (RGCs) that form synapses in distinct inner plexiform layer (IPL) sublaminae (at protein level).

The protein localises to the cell membrane. The protein resides in the synapse. In terms of biological role, adhesion molecule that promotes lamina-specific synaptic connections in the retina. Expressed in specific subsets of interneurons and retinal ganglion cells (RGCs) and promotes synaptic connectivity via homophilic interactions. This is Protein sidekick-1 from Mus musculus (Mouse).